A 207-amino-acid chain; its full sequence is Ribosomal RNA small subunit methyltransferase G (207 aa).

S-adenosyl-L-methionine is bound by residues Gly75, Leu80, 126 to 127, and Arg141; that span reads VE.

It belongs to the methyltransferase superfamily. RNA methyltransferase RsmG family.

Its subcellular location is the cytoplasm. It carries out the reaction guanosine(527) in 16S rRNA + S-adenosyl-L-methionine = N(7)-methylguanosine(527) in 16S rRNA + S-adenosyl-L-homocysteine. Functionally, specifically methylates the N7 position of guanine in position 527 of 16S rRNA. This is Ribosomal RNA small subunit methyltransferase G from Psychromonas ingrahamii (strain DSM 17664 / CCUG 51855 / 37).